The sequence spans 122 residues: Interferon alpha-inducible protein 27, mitochondrial (122 aa).

The transit peptide at 1–33 (MEASALTSSAVTSVAKVVRVASGSAVVLPLARI) directs the protein to the mitochondrion. Residues 34 to 57 (ATVVIGGVVAMAAVPMVLSAMGFT) traverse the membrane as a helical segment. Lys-69 is covalently cross-linked (Glycyl lysine isopeptide (Lys-Gly) (interchain with G-Cter in ubiquitin)). Transmembrane regions (helical) follow at residues 71 to 91 (MSAA…VATL) and 99 to 119 (LSGL…AVIA). The interval 76-122 (IANGGGVASGSLVATLQSLGATGLSGLTKFILGSIGSAIAAVIARFY) is mediates interaction with SKP2 and hepatitis C virus non-structural protein NS5A. Residues 103–112 (TKFILGSIGS) are required for hepatitis C virus non-structural protein NS5A degradation.

The protein belongs to the IFI6/IFI27 family. In terms of assembly, homodimer. Interacts with hepatitis C virus/HCV non-structural protein NS5A; promotes the ubiquitin-mediated proteasomal degradation of NS5A. Interacts with SKP2; promotes the ubiquitin-mediated proteasomal degradation of NS5A. Interacts with NR4A1. May interact with BCL2. Post-translationally, ubiquitinated by TRIM21 via 'Lys-6'-linked ubiquitin chains leading to IFI27 mitochondrial migration.

The protein resides in the mitochondrion membrane. The protein localises to the nucleus inner membrane. Its subcellular location is the endoplasmic reticulum membrane. Its function is as follows. Probable adapter protein involved in different biological processes. Part of the signaling pathways that lead to apoptosis. Involved in type-I interferon-induced apoptosis characterized by a rapid and robust release of cytochrome C from the mitochondria and activation of BAX and caspases 2, 3, 6, 8 and 9. Also functions in TNFSF10-induced apoptosis. May also have a function in the nucleus, where it may be involved in the interferon-induced negative regulation of the transcriptional activity of NR4A1, NR4A2 and NR4A3 through the enhancement of XPO1-mediated nuclear export of these nuclear receptors. May thereby play a role in the vascular response to injury. In the innate immune response, has an antiviral activity towards hepatitis C virus/HCV. May prevent the replication of the virus by recruiting both the hepatitis C virus non-structural protein 5A/NS5A and the ubiquitination machinery via SKP2, promoting the ubiquitin-mediated proteasomal degradation of NS5A. Also promotes virus-induced pyroptosis by activating CASP3 in the mitochondria after 'Lys-6'-linked ubiquitination by TRIM21. The polypeptide is Interferon alpha-inducible protein 27, mitochondrial (Homo sapiens (Human)).